The primary structure comprises 122 residues: Large ribosomal subunit protein uL14 (122 aa).

The protein belongs to the universal ribosomal protein uL14 family. As to quaternary structure, part of the 50S ribosomal subunit. Forms a cluster with proteins L3 and L19. In the 70S ribosome, L14 and L19 interact and together make contacts with the 16S rRNA in bridges B5 and B8.

Binds to 23S rRNA. Forms part of two intersubunit bridges in the 70S ribosome. The polypeptide is Large ribosomal subunit protein uL14 (Thermosipho melanesiensis (strain DSM 12029 / CIP 104789 / BI429)).